The sequence spans 187 residues: Peptidyl-tRNA hydrolase (187 aa).

Tyr-14 is a tRNA binding site. Residue His-19 is the Proton acceptor of the active site. TRNA is bound by residues Tyr-64, Asn-66, and Asn-112.

Belongs to the PTH family. In terms of assembly, monomer.

It is found in the cytoplasm. The enzyme catalyses an N-acyl-L-alpha-aminoacyl-tRNA + H2O = an N-acyl-L-amino acid + a tRNA + H(+). In terms of biological role, hydrolyzes ribosome-free peptidyl-tRNAs (with 1 or more amino acids incorporated), which drop off the ribosome during protein synthesis, or as a result of ribosome stalling. Functionally, catalyzes the release of premature peptidyl moieties from peptidyl-tRNA molecules trapped in stalled 50S ribosomal subunits, and thus maintains levels of free tRNAs and 50S ribosomes. The chain is Peptidyl-tRNA hydrolase from Bdellovibrio bacteriovorus (strain ATCC 15356 / DSM 50701 / NCIMB 9529 / HD100).